The chain runs to 779 residues: Molybdenum cofactor sulfurase (779 aa).

Lys-247 bears the N6-(pyridoxal phosphate)lysine mark. Cys-409 is an active-site residue. One can recognise an MOSC domain in the interval 624 to 779; it reads SQSLGLEGVR…LTCGDVIVVS (156 aa). Ser-732 carries the phosphoserine modification.

Belongs to the class-V pyridoxal-phosphate-dependent aminotransferase family. MOCOS subfamily. The cofactor is pyridoxal 5'-phosphate.

The enzyme catalyses Mo-molybdopterin + L-cysteine + AH2 = thio-Mo-molybdopterin + L-alanine + A + H2O. It functions in the pathway cofactor biosynthesis; molybdopterin biosynthesis. Sulfurates the molybdenum cofactor. Sulfation of molybdenum is essential for xanthine dehydrogenase (XDH) and aldehyde oxidase (ADO) enzymes in which molybdenum cofactor is liganded by 1 oxygen and 1 sulfur atom in active form. This is Molybdenum cofactor sulfurase from Drosophila mojavensis (Fruit fly).